The primary structure comprises 184 residues: Protein DMP2 (184 aa).

Transmembrane regions (helical) follow at residues 19-39, 45-65, 105-125, and 142-162; these read LIKLLPTGTVFLFQFLNPVLT, LLINKYLTGVLIVICAFSCCF, VGDFVHAFFSLIVFSVISLLD, and IFLMVLPPVIGVISGAVFTVF.

This sequence belongs to the plant DMP1 protein family. Expressed constitutively in leaves, stems, flowers, siliques and roots.

The protein localises to the endoplasmic reticulum membrane. The protein resides in the vacuole membrane. Functionally, involved in membrane remodeling. The protein is Protein DMP2 of Arabidopsis thaliana (Mouse-ear cress).